The primary structure comprises 285 residues: Single myb histone 3 (285 aa).

The tract at residues 1-35 is disordered; the sequence is MGAPKQKWTSEEEDALRRGVRKHGAGKWRTIQKDP. The HTH myb-type domain occupies 1-60; it reads MGAPKQKWTSEEEDALRRGVRKHGAGKWRTIQKDPQFSPILSSRSNIDLKDKWRNLSFSA. A DNA-binding region (H-T-H motif) is located at residues 28-56; that stretch reads WRTIQKDPQFSPILSSRSNIDLKDKWRNL. Positions 113 to 181 constitute an H15 domain; that stretch reads TPPKYGAMIM…KVDNFYRLPD (69 aa). The stretch at 226-255 forms a coiled coil; it reads VKVTDAEAKAHDAHDQMMEAERMLKMAEDT.

Belongs to the histone H1/H5 family. SMH subfamily. As to quaternary structure, forms a homodimer and heterodimers.

It localises to the nucleus. Its subcellular location is the chromosome. The protein resides in the nucleolus. It is found in the telomere. Functionally, binds preferentially double-stranded telomeric repeats, but may also bind to the single telomeric strand. The protein is Single myb histone 3 (SMH3) of Zea mays (Maize).